We begin with the raw amino-acid sequence, 150 residues long: Avidin-related protein 3 (150 aa).

The signal sequence occupies residues 1-24 (MVHTTSPLLLLLLLSLALVAPSLS). One can recognise an Avidin-like domain in the interval 26–147 (RKCSLTGKWT…GYNNFTRQRT (122 aa)). A disulfide bridge connects residues Cys28 and Cys105. Positions 36, 40, 57, 59, and 63 each coordinate biotin. An N-linked (GlcNAc...) asparagine glycan is attached at Asn93. Ser95, Ser99, and Asn140 together coordinate biotin. Residue Asn141 is glycosylated (N-linked (GlcNAc...) asparagine).

This sequence belongs to the avidin/streptavidin family. Homotetramer. Glycosylated.

It is found in the secreted. In terms of biological role, forms a strong non-covalent specific complex with biotin. This Gallus gallus (Chicken) protein is Avidin-related protein 3 (AVR3).